The sequence spans 411 residues: Signal-transducing adaptor protein 2 (411 aa).

The 101-residue stretch at 20–120 (HYYESFLEKK…GFILTVVELR (101 aa)) folds into the PH domain. Position 22 is a phosphotyrosine (Tyr22). The SH2 domain maps to 152-248 (WCFLQVSRLE…RALVPFLLDE (97 aa)). The residue at position 250 (Tyr250) is a Phosphotyrosine; by PTK6. Residues 291-320 (VPVSVSSQEDKLPQLPPLPQLPDTDENYVT) form a disordered region. 2 positions are modified to phosphotyrosine: Tyr318 and Tyr330. Positions 338–364 (SSQAVPLKPKKPARLPAKPPKPSVVPK) are disordered. Residues 390–410 (TRLGDITAELEEKLQKRRALE) are a coiled coil.

Interacts with PTK6 and CSF1R. Phosphorylated on tyrosine. Phosphorylated by PTK6 at Tyr-250 modulates PTK6-mediated STAT3 activation. Widely expressed.

The protein localises to the cytoplasm. It localises to the membrane. Functionally, substrate of protein kinase PTK6. May play a regulatory role in the acute-phase response in systemic inflammation and may modulate STAT3 activity. The polypeptide is Signal-transducing adaptor protein 2 (Stap2) (Mus musculus (Mouse)).